The sequence spans 270 residues: Eukaryotic translation initiation factor 3 subunit G-1 (270 aa).

The 79-residue stretch at 189–267 folds into the RRM domain; it reads AAIRISNLSE…LILSVEWSKP (79 aa).

It belongs to the eIF-3 subunit G family. As to quaternary structure, component of the eukaryotic translation initiation factor 3 (eIF-3) complex. The eIF-3 complex interacts with pix.

The protein localises to the cytoplasm. Its function is as follows. RNA-binding component of the eukaryotic translation initiation factor 3 (eIF-3) complex, which is involved in protein synthesis of a specialized repertoire of mRNAs and, together with other initiation factors, stimulates binding of mRNA and methionyl-tRNAi to the 40S ribosome. The eIF-3 complex specifically targets and initiates translation of a subset of mRNAs involved in cell proliferation. This subunit can bind 18S rRNA. This chain is Eukaryotic translation initiation factor 3 subunit G-1, found in Drosophila ananassae (Fruit fly).